The following is a 288-amino-acid chain: Elongation factor Ts (288 aa).

The tract at residues 82–85 (TDFV) is involved in Mg(2+) ion dislocation from EF-Tu.

This sequence belongs to the EF-Ts family.

Its subcellular location is the cytoplasm. In terms of biological role, associates with the EF-Tu.GDP complex and induces the exchange of GDP to GTP. It remains bound to the aminoacyl-tRNA.EF-Tu.GTP complex up to the GTP hydrolysis stage on the ribosome. The polypeptide is Elongation factor Ts (Chlorobium chlorochromatii (strain CaD3)).